Here is a 335-residue protein sequence, read N- to C-terminus: Acetyl-coenzyme A carboxylase carboxyl transferase subunit alpha (335 aa).

The region spanning 40–294 (QLETLAARRR…KEAIEKHLNA (255 aa)) is the CoA carboxyltransferase C-terminal domain.

It belongs to the AccA family. Acetyl-CoA carboxylase is a heterohexamer composed of biotin carboxyl carrier protein (AccB), biotin carboxylase (AccC) and two subunits each of ACCase subunit alpha (AccA) and ACCase subunit beta (AccD).

It is found in the cytoplasm. It carries out the reaction N(6)-carboxybiotinyl-L-lysyl-[protein] + acetyl-CoA = N(6)-biotinyl-L-lysyl-[protein] + malonyl-CoA. It functions in the pathway lipid metabolism; malonyl-CoA biosynthesis; malonyl-CoA from acetyl-CoA: step 1/1. Its function is as follows. Component of the acetyl coenzyme A carboxylase (ACC) complex. First, biotin carboxylase catalyzes the carboxylation of biotin on its carrier protein (BCCP) and then the CO(2) group is transferred by the carboxyltransferase to acetyl-CoA to form malonyl-CoA. The polypeptide is Acetyl-coenzyme A carboxylase carboxyl transferase subunit alpha (Prochlorococcus marinus (strain MIT 9215)).